Reading from the N-terminus, the 576-residue chain is MFYNFISKDSILYRLILCFGIGIGTVFGLSPFSFFSAGVFASISCIFLFFSLNRTSIWKAFLWLLILSQILNFTAFYWIPGAISRISGVNTFVSILFFFLYGLISHLKFFLFYTLFRFSKIDSASKTYILLIFPAAGTLSDMITFQIFPWYWGNLISGSIVFEQFASICGVYGLSFLLLFISSTFLILVNYYKYKNSKEFKTSIASLICITFIYGFGLYRIGYINQSQNELKPKNLSVLMIQPDTSPGTKDLKADASYLSATMSKVFSLAIPTFENSPSLIVIPESAIPFHGTIDSEENRKEKIYSSTMEGIILYLSKHTGADVLFNELNLDENKLRNQVSLFKNLDGKTERYNKRRLLPFGEYLPMEKNFPFLRSIFQETSRYVPGEFPKLLIGNKIQNQRSFLPPEISKLNEPKTYRYEFSSIVEHTNKIRNLEYSYSILPLLCYEAMFTELVLDYFQNEQKPEVLINITNDSWFDSELEAYQHSGAVRLRAIETGLPLIRSAVSGISEVWDARGIPMIVPIGFHETGTRAFSIRLDAIESTIYTRFGNSFLWIFCILILISRLIFVSRIERKS.

Transmembrane regions (helical) follow at residues 15–35, 38–58, 60–80, 92–112, 128–148, 168–188, and 204–224; these read LILC…FSFF, GVFA…TSIW, AFLW…YWIP, FVSI…FFLF, YILL…FQIF, ICGV…FLIL, and IASL…IGYI. The CN hydrolase domain maps to 236-538; it reads LSVLMIQPDT…TGTRAFSIRL (303 aa). E285 serves as the catalytic Proton acceptor. K355 is a catalytic residue. The active-site Nucleophile is C446. A helical membrane pass occupies residues 549–569; it reads FGNSFLWIFCILILISRLIFV.

The protein belongs to the CN hydrolase family. Apolipoprotein N-acyltransferase subfamily.

It is found in the cell inner membrane. It catalyses the reaction N-terminal S-1,2-diacyl-sn-glyceryl-L-cysteinyl-[lipoprotein] + a glycerophospholipid = N-acyl-S-1,2-diacyl-sn-glyceryl-L-cysteinyl-[lipoprotein] + a 2-acyl-sn-glycero-3-phospholipid + H(+). It functions in the pathway protein modification; lipoprotein biosynthesis (N-acyl transfer). Functionally, catalyzes the phospholipid dependent N-acylation of the N-terminal cysteine of apolipoprotein, the last step in lipoprotein maturation. This is Apolipoprotein N-acyltransferase 1 from Leptospira interrogans serogroup Icterohaemorrhagiae serovar Lai (strain 56601).